The sequence spans 407 residues: Na(+)-translocating NADH-quinone reductase subunit F (407 aa).

A helical transmembrane segment spans residues 3 to 23; it reads IILGVAMFTGIVMVLVLLILF. The region spanning 32-126 is the 2Fe-2S ferredoxin-type domain; it reads GDIAVEVNGD…NLKIELPEEI (95 aa). [2Fe-2S] cluster is bound by residues C69, C75, C78, and C110. The FAD-binding FR-type domain occupies 129–269; it reads VKKWECEVIS…SGPFGEFFAK (141 aa).

This sequence belongs to the NqrF family. As to quaternary structure, composed of six subunits; NqrA, NqrB, NqrC, NqrD, NqrE and NqrF. [2Fe-2S] cluster serves as cofactor. FAD is required as a cofactor.

Its subcellular location is the cell inner membrane. The enzyme catalyses a ubiquinone + n Na(+)(in) + NADH + H(+) = a ubiquinol + n Na(+)(out) + NAD(+). NQR complex catalyzes the reduction of ubiquinone-1 to ubiquinol by two successive reactions, coupled with the transport of Na(+) ions from the cytoplasm to the periplasm. The first step is catalyzed by NqrF, which accepts electrons from NADH and reduces ubiquinone-1 to ubisemiquinone by a one-electron transfer pathway. This is Na(+)-translocating NADH-quinone reductase subunit F from Serratia proteamaculans (strain 568).